The chain runs to 189 residues: Putative manganese efflux pump MntP (189 aa).

The next 6 membrane-spanning stretches (helical) occupy residues 3-23 (LSAT…ASIG), 41-61 (LIFG…GLFA), 65-85 (ILEW…CRMI), 104-124 (FWVL…IGVG), 132-152 (IVHT…LGML), and 165-185 (AEII…YEHI).

This sequence belongs to the MntP (TC 9.B.29) family.

It is found in the cell inner membrane. Probably functions as a manganese efflux pump. This is Putative manganese efflux pump MntP from Yersinia enterocolitica serotype O:8 / biotype 1B (strain NCTC 13174 / 8081).